The primary structure comprises 901 residues: HTH-type transcriptional regulator MalT (901 aa).

39-46 (SPAGYGKT) contacts ATP. Residues 829–894 (ELIRTSPLTQ…AAVQHAQKLL (66 aa)) enclose the HTH luxR-type domain. The segment at residues 853-872 (NEQIAGELEVAATTIKTHIR) is a DNA-binding region (H-T-H motif).

It belongs to the MalT family. As to quaternary structure, monomer in solution. Oligomerizes to an active state in the presence of the positive effectors ATP and maltotriose.

Its activity is regulated as follows. Activated by ATP and maltotriose, which are both required for DNA binding. Positively regulates the transcription of the maltose regulon whose gene products are responsible for uptake and catabolism of malto-oligosaccharides. Specifically binds to the promoter region of its target genes, recognizing a short DNA motif called the MalT box. In Escherichia coli O139:H28 (strain E24377A / ETEC), this protein is HTH-type transcriptional regulator MalT.